Reading from the N-terminus, the 287-residue chain is Acetyl-coenzyme A carboxylase carboxyl transferase subunit beta (287 aa).

Positions 28 to 287 constitute a CoA carboxyltransferase N-terminal domain; the sequence is LWKKCPKCEN…ILSLLTNKVA (260 aa). Residues C32, C35, C51, and C54 each contribute to the Zn(2+) site. The C4-type zinc finger occupies 32–54; sequence CPKCENVLYRPELEKNLDVCPKC.

The protein belongs to the AccD/PCCB family. Acetyl-CoA carboxylase is a heterohexamer composed of biotin carboxyl carrier protein (AccB), biotin carboxylase (AccC) and two subunits each of ACCase subunit alpha (AccA) and ACCase subunit beta (AccD). Requires Zn(2+) as cofactor.

It is found in the cytoplasm. The catalysed reaction is N(6)-carboxybiotinyl-L-lysyl-[protein] + acetyl-CoA = N(6)-biotinyl-L-lysyl-[protein] + malonyl-CoA. The protein operates within lipid metabolism; malonyl-CoA biosynthesis; malonyl-CoA from acetyl-CoA: step 1/1. Functionally, component of the acetyl coenzyme A carboxylase (ACC) complex. Biotin carboxylase (BC) catalyzes the carboxylation of biotin on its carrier protein (BCCP) and then the CO(2) group is transferred by the transcarboxylase to acetyl-CoA to form malonyl-CoA. The protein is Acetyl-coenzyme A carboxylase carboxyl transferase subunit beta of Marinomonas sp. (strain MWYL1).